Here is a 278-residue protein sequence, read N- to C-terminus: 4-diphosphocytidyl-2-C-methyl-D-erythritol kinase (278 aa).

K9 is a catalytic residue. 93–103 contributes to the ATP binding site; the sequence is PLGGGLGGGSS. D135 is a catalytic residue.

Belongs to the GHMP kinase family. IspE subfamily.

It catalyses the reaction 4-CDP-2-C-methyl-D-erythritol + ATP = 4-CDP-2-C-methyl-D-erythritol 2-phosphate + ADP + H(+). The protein operates within isoprenoid biosynthesis; isopentenyl diphosphate biosynthesis via DXP pathway; isopentenyl diphosphate from 1-deoxy-D-xylulose 5-phosphate: step 3/6. In terms of biological role, catalyzes the phosphorylation of the position 2 hydroxy group of 4-diphosphocytidyl-2C-methyl-D-erythritol. The polypeptide is 4-diphosphocytidyl-2-C-methyl-D-erythritol kinase (Nitrosomonas europaea (strain ATCC 19718 / CIP 103999 / KCTC 2705 / NBRC 14298)).